The following is a 366-amino-acid chain: MAPTAASAAAGEEQQAVGLAARDSSGHLSPFAISRRSTGDDDVAIKILFCGICHSDLHCIKNEWKHSIYPLVPGHEIAGVVTEVGKNVTRFKAGDRVGVGCMVNSCRSCESCNNGFENHCPEGVFTYNSVDKDGTVTYGGYSSMVVVHERFVVMFPEAMPLDVGAPLLCAGITVYTPMKYHGLNAPGKHVGVLGLGGLGHVAVKFARAFGLKVTVISSSPGKKREALERLGADAFVVSSSAEEMEAARSTMDGVINTVSANTPMAPYLALLKPNGKMILVGLPENPLEVPPFSLVHGNRTLAGSNIGGMADTQEMIELAAKHGVTADIEVIGADDVNTAMERLAKADVRYRFVIDVGNTLHAAAAE.

Cys53 provides a ligand contact to Zn(2+). Ser55 is a binding site for NADP(+). His75, Glu76, Cys106, Cys109, Cys112, Cys120, and Cys169 together coordinate Zn(2+). Residues Thr173, 194–199 (GLGGLG), 217–222 (SSSPGK), Thr257, Gly281, and 304–306 (SNI) contribute to the NADP(+) site.

The protein belongs to the zinc-containing alcohol dehydrogenase family. Homodimer. Requires Zn(2+) as cofactor.

It catalyses the reaction (E)-cinnamyl alcohol + NADP(+) = (E)-cinnamaldehyde + NADPH + H(+). It carries out the reaction (E)-coniferol + NADP(+) = (E)-coniferaldehyde + NADPH + H(+). The catalysed reaction is (E)-sinapyl alcohol + NADP(+) = (E)-sinapaldehyde + NADPH + H(+). The enzyme catalyses (E)-4-coumaroyl alcohol + NADP(+) = (E)-4-coumaraldehyde + NADPH + H(+). It catalyses the reaction (E)-caffeyl alcohol + NADP(+) = (E)-caffeyl aldehyde + NADPH + H(+). It participates in aromatic compound metabolism; phenylpropanoid biosynthesis. Its function is as follows. Involved in lignin biosynthesis. Catalyzes the final step specific for the production of lignin monomers. Catalyzes the NADPH-dependent reduction of coniferaldehyde, 5-hydroxyconiferaldehyde, sinapaldehyde, 4-coumaraldehyde and caffeyl aldehyde to their respective alcohols. The protein is Probable cinnamyl alcohol dehydrogenase 3 of Oryza sativa subsp. japonica (Rice).